A 373-amino-acid polypeptide reads, in one-letter code: NADPH-dependent 3-keto-steroid reductase HSD3B3 (373 aa).

NADP(+) is bound by residues 10–15, Tyr155, and Lys159; that span reads GAGGFL. The active-site Proton donor is Lys159. The helical transmembrane segment at 288 to 308 threads the bilayer; sequence VALLYWFGFLLETVSFLLRPV.

It belongs to the 3-beta-HSD family. In terms of tissue distribution, high levels in adrenal gland, kidney and male liver (at protein level). Low levels in female liver (at protein level). Expressed in ovaries (at protein level).

The protein resides in the endoplasmic reticulum membrane. It localises to the mitochondrion membrane. The catalysed reaction is a 3beta-hydroxysteroid + NADP(+) = a 3-oxosteroid + NADPH + H(+). The enzyme catalyses 5alpha-androstane-3beta,17beta-diol + NADP(+) = 17beta-hydroxy-5alpha-androstan-3-one + NADPH + H(+). It participates in steroid metabolism. Responsible for the reduction of the oxo group on the C-3 of 5alpha-androstane steroids. Catalyzes the conversion of dihydrotestosterone to its inactive form 5alpha-androstanediol, that does not bind androgen receptor/AR. Does not function as an isomerase. The chain is NADPH-dependent 3-keto-steroid reductase HSD3B3 (HSD3B3) from Mesocricetus auratus (Golden hamster).